The primary structure comprises 185 residues: Putative tyrosine-protein phosphatase OCA1 (185 aa).

The Tyrosine-protein phosphatase domain maps to Asn-18–Ser-178. Cys-116 acts as the Phosphocysteine intermediate in catalysis.

The protein belongs to the protein-tyrosine phosphatase family.

It localises to the cytoplasm. It carries out the reaction O-phospho-L-tyrosyl-[protein] + H2O = L-tyrosyl-[protein] + phosphate. Putative tyrosine-protein phosphatase required for protection against superoxide stress. In Meyerozyma guilliermondii (strain ATCC 6260 / CBS 566 / DSM 6381 / JCM 1539 / NBRC 10279 / NRRL Y-324) (Yeast), this protein is Putative tyrosine-protein phosphatase OCA1 (OCA1).